The sequence spans 146 residues: U-scoloptoxin(16)-Er1a (146 aa).

An N-terminal signal peptide occupies residues 1–26; it reads MNTVSVVQFLAVGCAVFVLYGRGVFA.

Belongs to the scoloptoxin-16 family. Contains 4 disulfide bonds. In terms of tissue distribution, expressed by the venom gland.

It is found in the secreted. This is U-scoloptoxin(16)-Er1a from Ethmostigmus rubripes (Giant centipede).